Here is a 100-residue protein sequence, read N- to C-terminus: Mitochondrial import inner membrane translocase subunit Tim10 B (100 aa).

The Twin CX3C motif motif lies at 25–49; the sequence is CFQRCVPSLHHRALDAEEEACLHSC. 2 disulfide bridges follow: Cys25-Cys49 and Cys29-Cys45.

It belongs to the small Tim family. Component of the TIM22 complex, which core is composed of TIMM22, associated with TIMM10 (TIMM10A and/or TIMM10B), TIMM9, AGK and TIMM29.

The protein resides in the mitochondrion inner membrane. Component of the TIM22 complex, a complex that mediates the import and insertion of multi-pass transmembrane proteins into the mitochondrial inner membrane. The TIM22 complex forms a twin-pore translocase that uses the membrane potential as the external driving force. In the TIM22 complex, it may act as a docking point for the soluble 70 kDa complex that guides the target proteins in transit through the aqueous mitochondrial intermembrane space. In Mus musculus (Mouse), this protein is Mitochondrial import inner membrane translocase subunit Tim10 B (Timm10b).